Consider the following 1336-residue polypeptide: Putative botulinum-like toxin Wo (1336 aa).

Residues 1–476 (MDVLEMFDVN…VAGMQRMVSL (476 aa)) form a has protease activity region. H250 is a Zn(2+) binding site. E251 is a catalytic residue. Positions 254 and 296 each coordinate Zn(2+).

Belongs to the peptidase M27 family. Zn(2+) serves as cofactor.

It catalyses the reaction Limited hydrolysis of proteins of the neuroexocytosis apparatus, synaptobrevins, SNAP25 or syntaxin. No detected action on small molecule substrates.. With respect to regulation, inhibited by EDTA and 1,10-phenanthroline. Functionally, when overexpressed the N-terminus (residues 1-476) cleaves rat synaptobrevin-2/VAMP2 between '89-Trp-|-Trp-90' in vitro. This releases the cytoplasmic domain of VAMP2 from the synaptic vesicle membrane, which would prevent the assembly of the trans-SNARE complex on the membrane and thus prevent vesicle-target membrane fusion and neurotransmitter release. The protein is Putative botulinum-like toxin Wo of Weissella oryzae (strain DSM 25784 / JCM 18191 / LMG 30913 / SG25).